Reading from the N-terminus, the 376-residue chain is MTQRPFSLLSHLGRICLAAAMLAALPAQAAERLKDLATFQGVRGNQLIGYGLVVGLDGTGDQVRQTPFTQQSLTNMLSQLGITVPAGSNMQLKNVAAVMVTATLPAFARPGQTVDVVVSSMGNAKSLRGGTLLMTPLKGADNSVYAIAQGNVLVGGAGASAGGSSVQINTLNGGRISAGAIVERPVPTSFAQDGLVYLEMNNSDFGTTQNAANAINRQFGAGTAMVMDARVLQLRGPLDPSQMPAFLSQIENLPVTLAPAVAKVIINARTGSVVMNRTVTIEEAAVAHGNLSVIINRQNQVFQPDTPFTDGQTVVAPNTQIEVRQEGGALQRVRTSANLADVVKALNALGATPQDLLAILQAMKAAGALRAELEII.

A signal peptide spans 1-29 (MTQRPFSLLSHLGRICLAAAMLAALPAQA).

Belongs to the FlgI family. The basal body constitutes a major portion of the flagellar organelle and consists of four rings (L,P,S, and M) mounted on a central rod.

Its subcellular location is the periplasm. It localises to the bacterial flagellum basal body. Functionally, assembles around the rod to form the L-ring and probably protects the motor/basal body from shearing forces during rotation. The sequence is that of Flagellar P-ring protein from Bordetella avium (strain 197N).